The sequence spans 338 residues: Ketol-acid reductoisomerase (NADP(+)) (338 aa).

Positions 1-181 (MKVFYDKDCD…GGGRAGIIET (181 aa)) constitute a KARI N-terminal Rossmann domain. Residues 24–27 (YGSQ), R47, and S52 contribute to the NADP(+) site. H107 is an active-site residue. G133 is an NADP(+) binding site. Positions 182–327 (DFREETETDL…GKLRAMMPWI (146 aa)) constitute a KARI C-terminal knotted domain. Residues D190, E194, E226, and E230 each contribute to the Mg(2+) site. S251 contacts substrate.

It belongs to the ketol-acid reductoisomerase family. The cofactor is Mg(2+).

It carries out the reaction (2R)-2,3-dihydroxy-3-methylbutanoate + NADP(+) = (2S)-2-acetolactate + NADPH + H(+). The enzyme catalyses (2R,3R)-2,3-dihydroxy-3-methylpentanoate + NADP(+) = (S)-2-ethyl-2-hydroxy-3-oxobutanoate + NADPH + H(+). It participates in amino-acid biosynthesis; L-isoleucine biosynthesis; L-isoleucine from 2-oxobutanoate: step 2/4. It functions in the pathway amino-acid biosynthesis; L-valine biosynthesis; L-valine from pyruvate: step 2/4. Its function is as follows. Involved in the biosynthesis of branched-chain amino acids (BCAA). Catalyzes an alkyl-migration followed by a ketol-acid reduction of (S)-2-acetolactate (S2AL) to yield (R)-2,3-dihydroxy-isovalerate. In the isomerase reaction, S2AL is rearranged via a Mg-dependent methyl migration to produce 3-hydroxy-3-methyl-2-ketobutyrate (HMKB). In the reductase reaction, this 2-ketoacid undergoes a metal-dependent reduction by NADPH to yield (R)-2,3-dihydroxy-isovalerate. The sequence is that of Ketol-acid reductoisomerase (NADP(+)) from Bordetella petrii (strain ATCC BAA-461 / DSM 12804 / CCUG 43448).